The primary structure comprises 161 residues: Troponin C, slow skeletal and cardiac muscles (161 aa).

Met1 bears the N-acetylmethionine mark. EF-hand domains lie at 16–51 (QKNE…LGQN), 52–87 (PTPE…CMKD), 92–127 (KSEE…TGET), and 128–161 (ITED…KGVE). Ca(2+) contacts are provided by Asp65, Asp67, Ser69, Thr71, and Glu76. Phosphoserine is present on Ser98. Ca(2+) contacts are provided by Asp105, Asn107, Asp109, Tyr111, Glu116, Asp141, Asn143, Asp145, Arg147, and Glu152.

The protein belongs to the troponin C family.

Functionally, troponin is the central regulatory protein of striated muscle contraction. Tn consists of three components: Tn-I which is the inhibitor of actomyosin ATPase, Tn-T which contains the binding site for tropomyosin and Tn-C. The binding of calcium to Tn-C abolishes the inhibitory action of Tn on actin filaments. This chain is Troponin C, slow skeletal and cardiac muscles (TNNC1), found in Homo sapiens (Human).